Reading from the N-terminus, the 515-residue chain is 2-isopropylmalate synthase (515 aa).

The 263-residue stretch at I4 to K266 folds into the Pyruvate carboxyltransferase domain. Mn(2+)-binding residues include D13, H201, H203, and N237. Positions Q391–P515 are regulatory domain.

This sequence belongs to the alpha-IPM synthase/homocitrate synthase family. LeuA type 1 subfamily. As to quaternary structure, homodimer. Requires Mn(2+) as cofactor.

Its subcellular location is the cytoplasm. It catalyses the reaction 3-methyl-2-oxobutanoate + acetyl-CoA + H2O = (2S)-2-isopropylmalate + CoA + H(+). It participates in amino-acid biosynthesis; L-leucine biosynthesis; L-leucine from 3-methyl-2-oxobutanoate: step 1/4. Functionally, catalyzes the condensation of the acetyl group of acetyl-CoA with 3-methyl-2-oxobutanoate (2-ketoisovalerate) to form 3-carboxy-3-hydroxy-4-methylpentanoate (2-isopropylmalate). The sequence is that of 2-isopropylmalate synthase from Geobacillus thermodenitrificans (strain NG80-2).